Here is a 169-residue protein sequence, read N- to C-terminus: Ureidoglycolate lyase (169 aa).

Belongs to the ureidoglycolate lyase family. Homodimer. The cofactor is Ni(2+).

The catalysed reaction is (S)-ureidoglycolate = urea + glyoxylate. It functions in the pathway nitrogen metabolism; (S)-allantoin degradation. In terms of biological role, catalyzes the catabolism of the allantoin degradation intermediate (S)-ureidoglycolate, generating urea and glyoxylate. Involved in the utilization of allantoin as nitrogen source. This chain is Ureidoglycolate lyase, found in Pseudomonas aeruginosa (strain LESB58).